The sequence spans 334 residues: ADP-L-glycero-D-manno-heptose-6-epimerase (334 aa).

NADP(+) is bound by residues 11-12, 32-33, Lys39, Lys54, 77-81, and Asn94; these read FI, DN, and QGACS. The active-site Proton acceptor is the Tyr141. Residue Lys145 participates in NADP(+) binding. Asn171 provides a ligand contact to substrate. NADP(+) is bound by residues Val172 and Lys180. Residue Lys180 is the Proton acceptor of the active site. Substrate-binding positions include Arg182, His189, 203-206, Arg216, and Tyr295; that span reads FGSN.

Belongs to the NAD(P)-dependent epimerase/dehydratase family. HldD subfamily. In terms of assembly, homopentamer. It depends on NADP(+) as a cofactor.

The enzyme catalyses ADP-D-glycero-beta-D-manno-heptose = ADP-L-glycero-beta-D-manno-heptose. Its pathway is nucleotide-sugar biosynthesis; ADP-L-glycero-beta-D-manno-heptose biosynthesis; ADP-L-glycero-beta-D-manno-heptose from D-glycero-beta-D-manno-heptose 7-phosphate: step 4/4. In terms of biological role, catalyzes the interconversion between ADP-D-glycero-beta-D-manno-heptose and ADP-L-glycero-beta-D-manno-heptose via an epimerization at carbon 6 of the heptose. This Neisseria meningitidis serogroup C / serotype 2a (strain ATCC 700532 / DSM 15464 / FAM18) protein is ADP-L-glycero-D-manno-heptose-6-epimerase.